The sequence spans 430 residues: Enolase (430 aa).

Residue Q167 participates in (2R)-2-phosphoglycerate binding. Residue E209 is the Proton donor of the active site. Mg(2+) is bound by residues D246, E287, and D314. (2R)-2-phosphoglycerate contacts are provided by K339, R368, and S369. K339 functions as the Proton acceptor in the catalytic mechanism.

This sequence belongs to the enolase family. It depends on Mg(2+) as a cofactor.

It localises to the cytoplasm. It is found in the secreted. Its subcellular location is the cell surface. It catalyses the reaction (2R)-2-phosphoglycerate = phosphoenolpyruvate + H2O. It functions in the pathway carbohydrate degradation; glycolysis; pyruvate from D-glyceraldehyde 3-phosphate: step 4/5. In terms of biological role, catalyzes the reversible conversion of 2-phosphoglycerate (2-PG) into phosphoenolpyruvate (PEP). It is essential for the degradation of carbohydrates via glycolysis. This Synechococcus sp. (strain ATCC 27144 / PCC 6301 / SAUG 1402/1) (Anacystis nidulans) protein is Enolase.